A 382-amino-acid polypeptide reads, in one-letter code: Apolipoprotein A-IV (382 aa).

The N-terminal stretch at 1-20 (MFLKAVVLTLSLVAVTGAQA) is a signal peptide. 13 repeat units span residues 33 to 54 (DYFSQLSNNAKEAVEHLQKSEL), 60 to 81 (ALFQDKIGQVNTYTDNLQKKLV), 82 to 103 (PFATELHERLRKDSEKLKEEIR), 115 to 136 (PHADEVSRKIGDNMHELQQRLG), 137 to 158 (PYAEELRTQVNTHAERLRNQLT), 159 to 180 (AHAQSLETTLRQNVDNLQASLT), 181 to 202 (PYADELKAKIDQNVEELKGHLT), 203 to 224 (PYADELKVKIDQNVEDLRRSLA), 225 to 246 (PYAQDVQEKLNHQLEGLAFQMK), 247 to 268 (KNAEELKAKISANADELRQKLV), 269 to 286 (PVAEVVRGKLRDNTEELQ), 287 to 308 (KSLAELSSHLDRQVEEFRRNVG), and 309 to 330 (PYGETFNKALLQQVEELRQKLG). Residues 33-330 (DYFSQLSNNA…QVEELRQKLG (298 aa)) form a 13 X 22 AA approximate tandem repeats region.

This sequence belongs to the apolipoprotein A1/A4/E family. In terms of assembly, homodimer. Phosphorylation sites are present in the extracellular medium.

Its subcellular location is the secreted. Its function is as follows. May have a role in chylomicrons and VLDL secretion and catabolism. Required for efficient activation of lipoprotein lipase by ApoC-II; potent activator of LCAT. Apoa-IV is a major component of HDL and chylomicrons. In Neomonachus schauinslandi (Hawaiian monk seal), this protein is Apolipoprotein A-IV (APOA4).